Consider the following 165-residue polypeptide: Ubiquitin-fold modifier-conjugating enzyme 1 (165 aa).

Catalysis depends on Cys-116, which acts as the Glycyl thioester intermediate.

This sequence belongs to the ubiquitin-conjugating enzyme family. UFC1 subfamily.

E2-like enzyme which forms an intermediate with UFM1 via a thioester linkage. This Drosophila virilis (Fruit fly) protein is Ubiquitin-fold modifier-conjugating enzyme 1.